The primary structure comprises 264 residues: Thymidylate synthase (264 aa).

Arg21 lines the dUMP pocket. His51 contributes to the (6R)-5,10-methylene-5,6,7,8-tetrahydrofolate binding site. 126-127 (RR) contacts dUMP. The active-site Nucleophile is Cys146. DUMP contacts are provided by residues 166-169 (RSAD), Asn177, and 207-209 (HIY). Position 169 (Asp169) interacts with (6R)-5,10-methylene-5,6,7,8-tetrahydrofolate. (6R)-5,10-methylene-5,6,7,8-tetrahydrofolate is bound at residue Ser263.

Belongs to the thymidylate synthase family. Bacterial-type ThyA subfamily. In terms of assembly, homodimer.

It localises to the cytoplasm. It carries out the reaction dUMP + (6R)-5,10-methylene-5,6,7,8-tetrahydrofolate = 7,8-dihydrofolate + dTMP. Its pathway is pyrimidine metabolism; dTTP biosynthesis. Its function is as follows. Catalyzes the reductive methylation of 2'-deoxyuridine-5'-monophosphate (dUMP) to 2'-deoxythymidine-5'-monophosphate (dTMP) while utilizing 5,10-methylenetetrahydrofolate (mTHF) as the methyl donor and reductant in the reaction, yielding dihydrofolate (DHF) as a by-product. This enzymatic reaction provides an intracellular de novo source of dTMP, an essential precursor for DNA biosynthesis. The sequence is that of Thymidylate synthase from Bacillus velezensis (strain DSM 23117 / BGSC 10A6 / LMG 26770 / FZB42) (Bacillus amyloliquefaciens subsp. plantarum).